Reading from the N-terminus, the 407-residue chain is Shaggy-related protein kinase iota (407 aa).

Over residues 1–19 the composition is skewed to low complexity; sequence MASLPLGPQPHALAPPLQL. The interval 1 to 23 is disordered; that stretch reads MASLPLGPQPHALAPPLQLHDGD. Ala2 is subject to N-acetylalanine. Residues 70 to 354 enclose the Protein kinase domain; the sequence is YMAERVVGTG…ALEACAHPFF (285 aa). ATP contacts are provided by residues 76–84 and Lys99; that span reads VGTGSFGIV. The Proton acceptor role is filled by Asp195. Position 230 is a phosphotyrosine (Tyr230).

Belongs to the protein kinase superfamily. CMGC Ser/Thr protein kinase family. GSK-3 subfamily. In terms of assembly, binds to KIB1. Interacts with BSK6. Autophosphorylated mainly on threonine and serine residues.

The enzyme catalyses L-seryl-[protein] + ATP = O-phospho-L-seryl-[protein] + ADP + H(+). The catalysed reaction is L-threonyl-[protein] + ATP = O-phospho-L-threonyl-[protein] + ADP + H(+). In terms of biological role, phosphorylates BSK1, BSK3, BSK5, BSK6, BSK8 and BSK11 in vitro. May mediate extracellular signals to regulate transcription in differentiating cells. This chain is Shaggy-related protein kinase iota (ASK9), found in Arabidopsis thaliana (Mouse-ear cress).